Here is a 117-residue protein sequence, read N- to C-terminus: Large ribosomal subunit protein bL20c (117 aa).

It belongs to the bacterial ribosomal protein bL20 family.

The protein localises to the plastid. It is found in the chloroplast. Its function is as follows. Binds directly to 23S ribosomal RNA and is necessary for the in vitro assembly process of the 50S ribosomal subunit. It is not involved in the protein synthesizing functions of that subunit. The protein is Large ribosomal subunit protein bL20c of Ceratophyllum demersum (Rigid hornwort).